A 118-amino-acid polypeptide reads, in one-letter code: UPF0102 protein NE0719 (118 aa).

Belongs to the UPF0102 family.

The sequence is that of UPF0102 protein NE0719 from Nitrosomonas europaea (strain ATCC 19718 / CIP 103999 / KCTC 2705 / NBRC 14298).